We begin with the raw amino-acid sequence, 954 residues long: Glycine dehydrogenase (decarboxylating) (954 aa).

An N6-(pyridoxal phosphate)lysine modification is found at Lys701.

This sequence belongs to the GcvP family. The glycine cleavage system is composed of four proteins: P, T, L and H. It depends on pyridoxal 5'-phosphate as a cofactor.

It catalyses the reaction N(6)-[(R)-lipoyl]-L-lysyl-[glycine-cleavage complex H protein] + glycine + H(+) = N(6)-[(R)-S(8)-aminomethyldihydrolipoyl]-L-lysyl-[glycine-cleavage complex H protein] + CO2. Functionally, the glycine cleavage system catalyzes the degradation of glycine. The P protein binds the alpha-amino group of glycine through its pyridoxal phosphate cofactor; CO(2) is released and the remaining methylamine moiety is then transferred to the lipoamide cofactor of the H protein. The sequence is that of Glycine dehydrogenase (decarboxylating) from Bordetella pertussis (strain Tohama I / ATCC BAA-589 / NCTC 13251).